Consider the following 161-residue polypeptide: TM2 domain-containing protein DDB_G0278163 (161 aa).

The Cytoplasmic segment spans residues 1–24 (MGHHHHHHGGSGHHHHHHHHGSGH). The helical transmembrane segment at 25-45 (YGGGAVLVTPIVTPVPVVYGS) threads the bilayer. At 46–54 (RSSSYCPKS) the chain is on the extracellular side. The TM2 domain maps to 52 to 100 (PKSMTVAYVLWFFFGILGFHRLYLGRVGTFFLYFFTAGVFGLGWLFDAF). The chain crosses the membrane as a helical span at residues 55-75 (MTVAYVLWFFFGILGFHRLYL). At 76-80 (GRVGT) the chain is on the cytoplasmic side. A helical transmembrane segment spans residues 81 to 101 (FFLYFFTAGVFGLGWLFDAFY). The Extracellular portion of the chain corresponds to 102–161 (THKMVKHYNECEFTKSCVGQSPPATIPIYQSEGAYPTYQQVPQQPPQFYQPQQQQPQYQP). Positions 139-161 (YQQVPQQPPQFYQPQQQQPQYQP) are disordered.

Belongs to the TM2 family.

The protein localises to the membrane. This chain is TM2 domain-containing protein DDB_G0278163, found in Dictyostelium discoideum (Social amoeba).